The sequence spans 88 residues: ATP synthase F(0) complex subunit f, mitochondrial (88 aa).

A2 is subject to N-acetylalanine. S3 bears the Phosphoserine mark. K16 bears the N6-acetyllysine mark. A helical membrane pass occupies residues 62–79 (MVLAAYVVFNYCRSYKEL).

It belongs to the ATPase F chain family. As to quaternary structure, component of the ATP synthase complex composed at least of ATP5F1A/subunit alpha, ATP5F1B/subunit beta, ATP5MC1/subunit c (homooctomer), MT-ATP6/subunit a, MT-ATP8/subunit 8, ATP5ME/subunit e, ATP5MF/subunit f, ATP5MG/subunit g, ATP5MK/subunit k, ATP5MJ/subunit j, ATP5F1C/subunit gamma, ATP5F1D/subunit delta, ATP5F1E/subunit epsilon, ATP5PF/subunit F6, ATP5PB/subunit b, ATP5PD/subunit d, ATP5PO/subunit OSCP. ATP synthase complex consists of a soluble F(1) head domain (subunits alpha(3) and beta(3)) - the catalytic core - and a membrane F(0) domain - the membrane proton channel (subunits c, a, 8, e, f, g, k and j). These two domains are linked by a central stalk (subunits gamma, delta, and epsilon) rotating inside the F1 region and a stationary peripheral stalk (subunits F6, b, d, and OSCP).

The protein resides in the mitochondrion. Its subcellular location is the mitochondrion inner membrane. Its function is as follows. Subunit f, of the mitochondrial membrane ATP synthase complex (F(1)F(0) ATP synthase or Complex V) that produces ATP from ADP in the presence of a proton gradient across the membrane which is generated by electron transport complexes of the respiratory chain. ATP synthase complex consist of a soluble F(1) head domain - the catalytic core - and a membrane F(1) domain - the membrane proton channel. These two domains are linked by a central stalk rotating inside the F(1) region and a stationary peripheral stalk. During catalysis, ATP synthesis in the catalytic domain of F(1) is coupled via a rotary mechanism of the central stalk subunits to proton translocation. In vivo, can only synthesize ATP although its ATP hydrolase activity can be activated artificially in vitro. Part of the complex F(0) domain. This Sus scrofa (Pig) protein is ATP synthase F(0) complex subunit f, mitochondrial.